A 270-amino-acid chain; its full sequence is Nuclease PA3 (270 aa).

A divalent metal cation-binding residues include W1, H6, H15, D45, and H60. 1 to 6 (WGALGH) lines the substrate pocket. Residues 45–51 (DEYRLTS), 60–63 (HFID), and 73–78 (NVDYER) each bind substrate. Intrachain disulfides connect C72–C217 and C80–C85. A substrate-binding site is contributed by N92. An N-linked (GlcNAc...) asparagine glycan is attached at N92. A divalent metal cation contacts are provided by H116, D120, and H126. The interval 116 to 164 (HFIGDMTQPLHDEAYAVGGNKINVTFDGYHDNLHSDWDTYMPQKLIGGH) is substrate binding. N-linked (GlcNAc...) asparagine glycosylation is present at N138. A divalent metal cation-binding residues include H149 and D153. N-linked (GlcNAc...) asparagine glycosylation is found at N184 and N197.

It belongs to the nuclease type I family. Zn(2+) is required as a cofactor.

It localises to the secreted. It catalyses the reaction a ribonucleoside 3'-phosphate + H2O = a ribonucleoside + phosphate. In terms of biological role, hydrolyzes only single-stranded DNA and RNA without apparent specificity for bases. In Penicillium sp, this protein is Nuclease PA3.